A 216-amino-acid polypeptide reads, in one-letter code: 3-isopropylmalate dehydratase small subunit 1 (216 aa).

It belongs to the LeuD family. LeuD type 1 subfamily. In terms of assembly, heterodimer of LeuC and LeuD.

The enzyme catalyses (2R,3S)-3-isopropylmalate = (2S)-2-isopropylmalate. Its pathway is amino-acid biosynthesis; L-leucine biosynthesis; L-leucine from 3-methyl-2-oxobutanoate: step 2/4. Functionally, catalyzes the isomerization between 2-isopropylmalate and 3-isopropylmalate, via the formation of 2-isopropylmaleate. The protein is 3-isopropylmalate dehydratase small subunit 1 of Bordetella bronchiseptica (strain ATCC BAA-588 / NCTC 13252 / RB50) (Alcaligenes bronchisepticus).